A 383-amino-acid chain; its full sequence is Putative gustatory receptor 22c (383 aa).

Residues M1–R11 are Cytoplasmic-facing. Residues L12 to Y32 traverse the membrane as a helical segment. Residues R33–R45 are Extracellular-facing. Residues F46–G66 traverse the membrane as a helical segment. Over G67–H86 the chain is Cytoplasmic. The helical transmembrane segment at Y87–G107 threads the bilayer. The Extracellular segment spans residues S108–K144. N130 is a glycosylation site (N-linked (GlcNAc...) asparagine). The helical transmembrane segment at W145–N165 threads the bilayer. The Cytoplasmic segment spans residues N166–M250. Residues T251–L271 traverse the membrane as a helical segment. Residues D272–F279 lie on the Extracellular side of the membrane. The helical transmembrane segment at I280–I300 threads the bilayer. Residues A301–M360 lie on the Cytoplasmic side of the membrane. A helical transmembrane segment spans residues G361–M381. Over N382–L383 the chain is Extracellular.

This sequence belongs to the insect chemoreceptor superfamily. Gustatory receptor (GR) family. Gr22e subfamily. As to expression, taste bristles in the foreleg and labial palps.

The protein resides in the cell membrane. Probable gustatory receptor which mediates acceptance or avoidance behavior, depending on its substrates. In Drosophila melanogaster (Fruit fly), this protein is Putative gustatory receptor 22c (Gr22c).